We begin with the raw amino-acid sequence, 206 residues long: Small ribosomal subunit protein uS4 (206 aa).

The 61-residue stretch at 96 to 156 folds into the S4 RNA-binding domain; it reads QRLDNVVYRM…EKAKKQARIV (61 aa).

This sequence belongs to the universal ribosomal protein uS4 family. As to quaternary structure, part of the 30S ribosomal subunit. Contacts protein S5. The interaction surface between S4 and S5 is involved in control of translational fidelity.

Its function is as follows. One of the primary rRNA binding proteins, it binds directly to 16S rRNA where it nucleates assembly of the body of the 30S subunit. In terms of biological role, with S5 and S12 plays an important role in translational accuracy. This Alteromonas mediterranea (strain DSM 17117 / CIP 110805 / LMG 28347 / Deep ecotype) protein is Small ribosomal subunit protein uS4.